Consider the following 167-residue polypeptide: Large ribosomal subunit protein bL9 (167 aa).

Belongs to the bacterial ribosomal protein bL9 family.

Binds to the 23S rRNA. The protein is Large ribosomal subunit protein bL9 of Chlamydia trachomatis serovar L2 (strain ATCC VR-902B / DSM 19102 / 434/Bu).